The primary structure comprises 213 residues: 3-isopropylmalate dehydratase small subunit (213 aa).

Belongs to the LeuD family. LeuD type 1 subfamily. As to quaternary structure, heterodimer of LeuC and LeuD.

It catalyses the reaction (2R,3S)-3-isopropylmalate = (2S)-2-isopropylmalate. The protein operates within amino-acid biosynthesis; L-leucine biosynthesis; L-leucine from 3-methyl-2-oxobutanoate: step 2/4. In terms of biological role, catalyzes the isomerization between 2-isopropylmalate and 3-isopropylmalate, via the formation of 2-isopropylmaleate. In Magnetococcus marinus (strain ATCC BAA-1437 / JCM 17883 / MC-1), this protein is 3-isopropylmalate dehydratase small subunit.